We begin with the raw amino-acid sequence, 146 residues long: Large ribosomal subunit protein uL15 (146 aa).

Over residues 1–13 (MKLHELKPAEGSR) the composition is skewed to basic and acidic residues. A disordered region spans residues 1-47 (MKLHELKPAEGSRKSRKRIGRGTGSGLGRNAGKGEKGQKARAGGGVR). Over residues 21 to 31 (RGTGSGLGRNA) the composition is skewed to gly residues.

This sequence belongs to the universal ribosomal protein uL15 family. As to quaternary structure, part of the 50S ribosomal subunit.

Its function is as follows. Binds to the 23S rRNA. The protein is Large ribosomal subunit protein uL15 of Clostridium kluyveri (strain NBRC 12016).